The following is a 181-amino-acid chain: Protein Syd (181 aa).

Belongs to the Syd family.

The protein resides in the cell inner membrane. Its function is as follows. Interacts with the SecY protein in vivo. May bind preferentially to an uncomplexed state of SecY, thus functioning either as a chelating agent for excess SecY in the cell or as a regulatory factor that negatively controls the translocase function. In Escherichia coli (strain K12 / DH10B), this protein is Protein Syd.